We begin with the raw amino-acid sequence, 341 residues long: MNVKDFDFYLPEELIAQHPLEKRDTSRLMVLDKETGEISHKNFYDIIDYLNEGDTLVLNNTRVMPARLIGEKEGTGGKIEFLLLKRVEKDRWECLAKPGKSARVGRRFTFGDGKLKAEVVEVKDNGNRIVEFYYEGIFEEVLDSLGEMPLPPYIHERLEDRERYQTVYSKENGSAAAPTAGLHFTEELLHKIKDRGINIAYVTLHVGLGTFRPVKVDTIEDHEMHSEYYHLSKEDAEVINATKKRGNKVISVGTTSTRTLETIADEDGNVKETNGWTNIFIYPGYKFKVVDRLITNFHLPESTLIMLVSTLAGKEHVMNAYEEAVKEKYRFFSFGDAMFIK.

It belongs to the QueA family. As to quaternary structure, monomer.

Its subcellular location is the cytoplasm. It carries out the reaction 7-aminomethyl-7-carbaguanosine(34) in tRNA + S-adenosyl-L-methionine = epoxyqueuosine(34) in tRNA + adenine + L-methionine + 2 H(+). The protein operates within tRNA modification; tRNA-queuosine biosynthesis. Its function is as follows. Transfers and isomerizes the ribose moiety from AdoMet to the 7-aminomethyl group of 7-deazaguanine (preQ1-tRNA) to give epoxyqueuosine (oQ-tRNA). This Clostridium botulinum (strain Eklund 17B / Type B) protein is S-adenosylmethionine:tRNA ribosyltransferase-isomerase.